Here is a 227-residue protein sequence, read N- to C-terminus: Cytidylate kinase (227 aa).

Residue 12–20 (GPSGAGKGT) participates in ATP binding.

This sequence belongs to the cytidylate kinase family. Type 1 subfamily.

It localises to the cytoplasm. It catalyses the reaction CMP + ATP = CDP + ADP. The catalysed reaction is dCMP + ATP = dCDP + ADP. The polypeptide is Cytidylate kinase (Salmonella choleraesuis (strain SC-B67)).